The sequence spans 464 residues: ERO1-like protein alpha (464 aa).

The signal sequence occupies residues 1–23; that stretch reads MGRGWGLLVGLLGVVWLLRSGQG. Cystine bridges form between Cys35–Cys48, Cys37–Cys46, Cys85–Cys387, Cys94–Cys99, Cys94–Cys130, Cys99–Cys104, Cys207–Cys237, and Cys390–Cys393. Phosphoserine is present on residues Ser106, Ser142, and Ser144. Arg186, Thr188, and Trp199 together coordinate FAD. Residues Ser248 and His251 each contribute to the FAD site. Asn276 carries an N-linked (GlcNAc...) asparagine glycan. FAD-binding residues include Arg283 and Arg296. N-linked (GlcNAc...) asparagine glycosylation is present at Asn380.

It belongs to the EROs family. In terms of assembly, predominantly monomer. May function both as a monomer and a homodimer. Interacts with PDILT. Interacts with ERP44; the interaction results in retention of ERO1A in the endoplasmic reticulum. Requires FAD as cofactor. Post-translationally, N-glycosylated. The Cys-94/Cys-99 and Cys-390/Cys-393 disulfide bonds constitute the redox-active center. The Cys-94/Cys-99 disulfide bond may accept electron from P4HB and funnel them to the active site disulfide Cys-390/Cys-393. The regulatory Cys-99/Cys-104 disulfide bond stabilizes the other regulatory bond Cys-94/Cys-130. In terms of processing, phosphorylated on Ser-144 by FAM20C in the Golgi which increases its enzymatic activity. Phosphorylation is induced by lactation. It is also induced by hypoxia and reductive stress.

The protein resides in the endoplasmic reticulum membrane. It localises to the golgi apparatus lumen. The protein localises to the secreted. It is found in the cell projection. Its subcellular location is the dendrite. Its activity is regulated as follows. Enzyme activity is tightly regulated to prevent the accumulation of reactive oxygen species in the endoplasmic reticulum. Reversibly down-regulated by the formation of disulfide bonds between the active site Cys-94 and Cys-130, and between Cys-99 and Cys-104. Glutathione may be required to regulate its activity in the endoplasmic reticulum. Functionally, oxidoreductase involved in disulfide bond formation in the endoplasmic reticulum. Efficiently reoxidizes P4HB/PDI, the enzyme catalyzing protein disulfide formation, in order to allow P4HB to sustain additional rounds of disulfide formation. Following P4HB reoxidation, passes its electrons to molecular oxygen via FAD, leading to the production of reactive oxygen species (ROS) in the cell. Required for the proper folding of immunoglobulins. Plays an important role in ER stress-induced, CHOP-dependent apoptosis by activating the inositol 1,4,5-trisphosphate receptor IP3R1. In Rattus norvegicus (Rat), this protein is ERO1-like protein alpha.